We begin with the raw amino-acid sequence, 231 residues long: Ribose-5-phosphate isomerase A (231 aa).

Residues 28 to 31, 83 to 86, and 96 to 99 contribute to the substrate site; these read TGST, DGAD, and KGGG. Glutamate 105 serves as the catalytic Proton acceptor. Lysine 123 serves as a coordination point for substrate.

This sequence belongs to the ribose 5-phosphate isomerase family. In terms of assembly, homodimer.

It catalyses the reaction aldehydo-D-ribose 5-phosphate = D-ribulose 5-phosphate. The protein operates within carbohydrate degradation; pentose phosphate pathway; D-ribose 5-phosphate from D-ribulose 5-phosphate (non-oxidative stage): step 1/1. Catalyzes the reversible conversion of ribose-5-phosphate to ribulose 5-phosphate. This chain is Ribose-5-phosphate isomerase A, found in Rhizobium meliloti (strain 1021) (Ensifer meliloti).